A 367-amino-acid polypeptide reads, in one-letter code: Choline-phosphate cytidylyltransferase A (367 aa).

N-acetylmethionine is present on methionine 1. Residues 1-32 (MDAQSSAKVNSRKRRKEAPGPNGATEEDGIPS) form a disordered region. N6-acetyllysine is present on lysine 8. 4 residues coordinate CTP: isoleucine 84, phenylalanine 85, histidine 92, and lysine 122. Phosphocholine is bound by residues lysine 122 and tryptophan 151. CTP contacts are provided by histidine 168, aspartate 169, tyrosine 173, glutamine 195, arginine 196, threonine 197, and isoleucine 200. Amphipathic regions lie at residues 228-287 (KELN…EFIG) and 298-315 (ALKH…QAIS). Phosphoserine is present on serine 233. Residues 272 to 293 (IDLIQKWEEKSREFIGSFLEMF) are autoinhibitory (AI). The segment at 313-367 (AISPKQSPSSSPTHERSPSPSFRWPFSGKTSPSSSPASLSRCRAVTCDISEDEED) is disordered. Serine 315, serine 319, serine 321, serine 322, and serine 323 each carry phosphoserine. Polar residues predominate over residues 315–324 (SPKQSPSSSP). Copy 1 of the repeat occupies 319 to 324 (SPSSSP). Residues 319 to 348 (SPSSSPTHERSPSPSFRWPFSGKTSPSSSP) form a 3 X repeats region. A Phosphothreonine modification is found at threonine 325. 3 positions are modified to phosphoserine: serine 329, serine 331, and serine 333. Residues 329–333 (SPSPS) form a 2; approximate repeat. The span at 330–352 (PSPSFRWPFSGKTSPSSSPASLS) shows a compositional bias: low complexity. Position 342 is a phosphothreonine (threonine 342). A phosphoserine mark is found at serine 343, serine 345, serine 346, serine 347, serine 350, and serine 352. Residues 343-348 (SPSSSP) form repeat 3. Threonine 358 carries the post-translational modification Phosphothreonine. Serine 362 is modified (phosphoserine).

The protein belongs to the cytidylyltransferase family. As to quaternary structure, homodimer. In terms of processing, the serine residues of the C-terminus are phosphorylated. The inactive soluble form is stabilized by phosphorylation, the active membrane bound form is promoted by anionic lipids or diacylglycerol, and is stabilized by dephosphorylation. Monoubiquitinated by the SCF(FBXL2) complex, leading to proteasomal degradation. Brain and liver (at protein level). Also found in heart, kidney, spleen, lung, skeletal muscle, ovary and testis.

Its subcellular location is the cytoplasm. It localises to the cytosol. The protein localises to the membrane. It is found in the endoplasmic reticulum membrane. The protein resides in the nucleus. It catalyses the reaction phosphocholine + CTP + H(+) = CDP-choline + diphosphate. It participates in phospholipid metabolism; phosphatidylcholine biosynthesis; phosphatidylcholine from phosphocholine: step 1/2. Its activity is regulated as follows. Interconverts between an inactive cytosolic form and an active membrane-bound form. Activation involves disruption of an inhibitory interaction between helices at the base of the active site and the autoinhibitory (AI) region. Its function is as follows. Catalyzes the key rate-limiting step in the CDP-choline pathway for phosphatidylcholine biosynthesis. This chain is Choline-phosphate cytidylyltransferase A (Pcyt1a), found in Mus musculus (Mouse).